We begin with the raw amino-acid sequence, 243 residues long: Probable transcriptional regulatory protein Smal_3128 (243 aa).

This sequence belongs to the TACO1 family.

The protein resides in the cytoplasm. The sequence is that of Probable transcriptional regulatory protein Smal_3128 from Stenotrophomonas maltophilia (strain R551-3).